The following is a 627-amino-acid chain: Chaperone protein HtpG (627 aa).

Residues 1–339 (MKGQETRGFQ…SNDLPLNVSR (339 aa)) are a; substrate-binding. Positions 340–555 (EILQDSRVTQ…ADEMSTQMAK (216 aa)) are b. Residues 556-627 (LFAAAGQQAP…IRRMNQLLSA (72 aa)) form a c region.

It belongs to the heat shock protein 90 family. In terms of assembly, homodimer.

It is found in the cytoplasm. In terms of biological role, molecular chaperone. Has ATPase activity. The polypeptide is Chaperone protein HtpG (Pectobacterium atrosepticum (strain SCRI 1043 / ATCC BAA-672) (Erwinia carotovora subsp. atroseptica)).